Consider the following 356-residue polypeptide: Probable butyrate kinase (356 aa).

The protein belongs to the acetokinase family.

The protein resides in the cytoplasm. It carries out the reaction butanoate + ATP = butanoyl phosphate + ADP. In Coprothermobacter proteolyticus (strain ATCC 35245 / DSM 5265 / OCM 4 / BT), this protein is Probable butyrate kinase.